The chain runs to 492 residues: Fibroblast growth factor receptor substrate 3 (492 aa).

Glycine 2 carries the N-myristoyl glycine lipid modification. The IRS-type PTB domain occupies 13–115 (VPHNHPTKFK…QCNSINVTEE (103 aa)). Disordered regions lie at residues 125-205 (PQEL…EDRR), 337-413 (QQLR…EPPR), and 425-492 (WGTA…DLPL). Composition is skewed to polar residues over residues 133-147 (GSSQ…SFSN) and 166-185 (PSTS…QTLI). A compositionally biased stretch (low complexity) spans 374-385 (TSTRASARSHSS).

As to quaternary structure, binds NTRK1, FGFR1, NGFR, GRB2, PTPN11 and ERK2. In terms of processing, phosphorylated on tyrosine residues upon stimulation by BFGF or NGFB.

It localises to the membrane. Its function is as follows. Adapter protein that links FGF and NGF receptors to downstream signaling pathways. Involved in the activation of MAP kinases. Down-regulates ERK2 signaling by interfering with the phosphorylation and nuclear translocation of ERK2. This Rattus norvegicus (Rat) protein is Fibroblast growth factor receptor substrate 3 (Frs3).